The primary structure comprises 171 residues: Zinc uptake regulation protein (171 aa).

It belongs to the Fur family.

In terms of biological role, acts as a negative controlling element, employing Zn(2+) as a cofactor to bind the operator of the repressed genes (znuACB). The polypeptide is Zinc uptake regulation protein (zur) (Escherichia coli (strain K12)).